The primary structure comprises 1029 residues: Protein SUPPRESSOR OF PHYA-105 1 (1029 aa).

Residues 42-69 are disordered; it reads SETANSDCPGSSAHRNVDLTKPPPPEEA. The 342-residue stretch at 188–529 folds into the Protein kinase domain; the sequence is VQMKTPVSSS…ARDILKSELI (342 aa). Residues 194 to 202 and Lys-216 contribute to the ATP site; that span reads VSSSNFSQL. A disordered region spans residues 213-269; the sequence is VVGKNQETPPEFVSDQDLGSKEKKLDISKSPTPHDVLPLKSSPKGNGMVSHGDGNHS. The segment covering 230–239 has biased composition (basic and acidic residues); it reads LGSKEKKLDI. The active-site Proton acceptor is Asp-316. The segment at 347–392 is disordered; sequence EDLNRRRPVVEESSSGGRDSKKRKMDLHLNSPGNQLQATSTGRPFK. Over residues 377–388 the composition is skewed to polar residues; sequence SPGNQLQATSTG. A coiled-coil region spans residues 557–589; it reads VQKKKKASKLLQDIQTLEDDIKEAERRYSSNVS. The segment at 653-679 is disordered; the sequence is ARSDKTLKDRDRCSENQNENQDMSTKG. The span at 654–666 shows a compositional bias: basic and acidic residues; it reads RSDKTLKDRDRCS. The span at 667-679 shows a compositional bias: polar residues; sequence ENQNENQDMSTKG. 7 WD repeats span residues 714–753, 763–803, 806–846, 848–888, 892–930, 932–971, and 997–1029; these read NSAS…NESV, VNKS…GFSQ, EHQK…SLGT, WSPA…TPWC, GHEK…SSGL, PGAC…YSYY, and DNGQ…LKLV. Residues 866–881 carry the DWD box motif; sequence LAFGSADYKVYCYDLR.

In terms of assembly, interacts with CO, COP1, HFR1, HY5 and PHYA. Light induces dissociation of the SPA1/COP1 complex. Binds to CRY1 in response to blue light, this interaction prevents SPA1/COP1 complex formation but stimulate CRY2/COP1 complex, and thus avoid COP1-dependent degradation of the transcription factor HY5 by the proteasome and promotes hypocotyl elongation.

The protein localises to the nucleus speckle. The protein resides in the nucleus. It localises to the PML body. Functionally, controls normal photoperiodic flowering and regulates circadian rhythms. Required for suppression of photomorphogenesis in dark-grown seedlings and for normal elongation growth of adult plants. Integral component of the COP1/SPA E3 ubiquitin-protein ligase complex. Involved in HY5, HFR1, LAF1 and CO degradation. The sequence is that of Protein SUPPRESSOR OF PHYA-105 1 (SPA1) from Arabidopsis thaliana (Mouse-ear cress).